The following is a 218-amino-acid chain: Small ribosomal subunit protein uS3c (218 aa).

The KH type-2 domain maps to 47–120 (VRTHIKSSSN…KLHIAIEKVA (74 aa)).

This sequence belongs to the universal ribosomal protein uS3 family. As to quaternary structure, part of the 30S ribosomal subunit.

The protein localises to the plastid. It is found in the chloroplast. This chain is Small ribosomal subunit protein uS3c (rps3), found in Picea abies (Norway spruce).